We begin with the raw amino-acid sequence, 74 residues long: MGGISIWNLVIIVLLVVLLFGTKKLRGLGSDLGESIKGFKKAMNDDKAKDAEFEKVEQKTAESTEQKAKEKEQA.

A helical membrane pass occupies residues 1 to 21; sequence MGGISIWNLVIIVLLVVLLFG. Positions 51–74 are disordered; sequence AEFEKVEQKTAESTEQKAKEKEQA.

Belongs to the TatA/E family. The Tat system comprises two distinct complexes: a TatABC complex, containing multiple copies of TatA, TatB and TatC subunits, and a separate TatA complex, containing only TatA subunits. Substrates initially bind to the TatABC complex, which probably triggers association of the separate TatA complex to form the active translocon.

The protein resides in the cell inner membrane. Part of the twin-arginine translocation (Tat) system that transports large folded proteins containing a characteristic twin-arginine motif in their signal peptide across membranes. TatA could form the protein-conducting channel of the Tat system. The chain is Sec-independent protein translocase protein TatA from Glaesserella parasuis serovar 5 (strain SH0165) (Haemophilus parasuis).